The sequence spans 304 residues: Beta-lactamase AER-1 (304 aa).

The first 37 residues, 1–37, serve as a signal peptide directing secretion; the sequence is MYVLSVEKPTLRNKFAAGIGVVLVCVVASFIPTPVFA. Residue Ser83 is the Acyl-ester intermediate of the active site. A disulfide bond links Cys90 and Cys137. The disordered stretch occupies residues 173–195; that stretch reads ETQLDRKEPELNEGTPGDVRDTT. Substrate is bound at residue 248-250; it reads KTG.

It belongs to the class-A beta-lactamase family.

The enzyme catalyses a beta-lactam + H2O = a substituted beta-amino acid. Hydrolyzes carbenicillin. Methicillin and oxacillin are weakly hydrolyzed. This Aeromonas hydrophila protein is Beta-lactamase AER-1 (aer1).